The chain runs to 151 residues: Large ribosomal subunit protein uL30 (151 aa).

The protein belongs to the universal ribosomal protein uL30 family. In terms of assembly, part of the 50S ribosomal subunit.

The polypeptide is Large ribosomal subunit protein uL30 (Methanothrix thermoacetophila (strain DSM 6194 / JCM 14653 / NBRC 101360 / PT) (Methanosaeta thermophila)).